We begin with the raw amino-acid sequence, 281 residues long: Fructose-bisphosphate aldolase class 1 (281 aa).

Lys191 functions as the Schiff-base intermediate with dihydroxyacetone-P in the catalytic mechanism.

It belongs to the DeoC/FbaB aldolase family. In terms of assembly, homooctamer.

The protein localises to the cytoplasm. It catalyses the reaction beta-D-fructose 1,6-bisphosphate = D-glyceraldehyde 3-phosphate + dihydroxyacetone phosphate. Activated by citrate. The sequence is that of Fructose-bisphosphate aldolase class 1 (fba) from Pyrococcus abyssi (strain GE5 / Orsay).